Consider the following 1219-residue polypeptide: NHS-like protein 2 (1219 aa).

Disordered regions lie at residues 162-181 (FRSS…QSAK), 288-321 (FSNF…HSAP), 336-364 (FPSL…SDHP), 400-423 (TPSA…GNSW), 474-591 (GLLA…ELVL), 669-741 (QGSS…SASV), 854-938 (GAEE…STAS), 979-1003 (IGLQ…KKPS), 1033-1087 (LEED…DKTA), and 1121-1197 (WKET…KTTN). The segment covering 288–312 (FSNFSQRDQGHSSSPTGSLARSATS) has biased composition (polar residues). A compositionally biased stretch (basic and acidic residues) spans 352–364 (GDAHQARSASDHP). At Ser-499 the chain carries Phosphoserine. Residues 526–545 (ASTSSEGSNSTDNIAALSTE) are compositionally biased toward polar residues. The span at 549-567 (RHRRQRSKSISLKKAKKKP) shows a compositional bias: basic residues. Position 575 is a phosphoserine (Ser-575). Residues 674–687 (SLASPSTSRATTPS) show a composition bias toward low complexity. The residue at position 690 (Ser-690) is a Phosphoserine. Polar residues-rich tracts occupy residues 708–729 (MSPS…SMSL) and 897–908 (TSPTMAMASRSS). Position 1048 is a phosphoserine (Ser-1048). Over residues 1076 to 1087 (AEEKSLISDKTA) the composition is skewed to basic and acidic residues. The span at 1131–1144 (SKPSSHSPVKNTAD) shows a compositional bias: polar residues. Low complexity predominate over residues 1145 to 1160 (SPTGEAAAAPGPSSSA). Ser-1208 carries the phosphoserine modification.

The protein belongs to the NHS family.

The protein is NHS-like protein 2 of Mus musculus (Mouse).